The chain runs to 96 residues: Co-chaperonin GroES (96 aa).

The protein belongs to the GroES chaperonin family. Heptamer of 7 subunits arranged in a ring. Interacts with the chaperonin GroEL.

The protein localises to the cytoplasm. In terms of biological role, together with the chaperonin GroEL, plays an essential role in assisting protein folding. The GroEL-GroES system forms a nano-cage that allows encapsulation of the non-native substrate proteins and provides a physical environment optimized to promote and accelerate protein folding. GroES binds to the apical surface of the GroEL ring, thereby capping the opening of the GroEL channel. The sequence is that of Co-chaperonin GroES from Legionella jeonii.